We begin with the raw amino-acid sequence, 278 residues long: Tryptophan synthase alpha chain (278 aa).

Catalysis depends on proton acceptor residues Glu50 and Asp61.

Belongs to the TrpA family. As to quaternary structure, tetramer of two alpha and two beta chains.

It carries out the reaction (1S,2R)-1-C-(indol-3-yl)glycerol 3-phosphate + L-serine = D-glyceraldehyde 3-phosphate + L-tryptophan + H2O. It participates in amino-acid biosynthesis; L-tryptophan biosynthesis; L-tryptophan from chorismate: step 5/5. Its function is as follows. The alpha subunit is responsible for the aldol cleavage of indoleglycerol phosphate to indole and glyceraldehyde 3-phosphate. In Methylorubrum populi (strain ATCC BAA-705 / NCIMB 13946 / BJ001) (Methylobacterium populi), this protein is Tryptophan synthase alpha chain.